The following is a 474-amino-acid chain: Glutathione synthetase (474 aa).

At Ala2 the chain carries N-acetylalanine. Arg125 contacts substrate. Position 144 (Glu144) interacts with ATP. Residues Glu144 and Asn146 each contribute to the Mg(2+) site. Substrate is bound by residues 148–151 (ISAS), 214–216 (ERN), Gln220, and 267–270 (RDGY). Residues Lys305, 364–373 (KPQREGGGNN), Tyr375, and 398–401 (MEKI) contribute to the ATP site. Glu368 contacts Mg(2+). At Ser415 the chain carries Phosphoserine. Glu425 lines the ATP pocket. Arg450 provides a ligand contact to substrate. ATP-binding residues include Lys452 and Asp458. 461–462 (VA) contacts substrate.

The protein belongs to the eukaryotic GSH synthase family. As to quaternary structure, homodimer. The cofactor is Mg(2+).

It catalyses the reaction gamma-L-glutamyl-L-cysteine + glycine + ATP = glutathione + ADP + phosphate + H(+). It carries out the reaction gamma-L-glutamyl-(2S)-2-aminobutanoate + glycine + ATP = ophthalmate + ADP + phosphate + H(+). Its pathway is sulfur metabolism; glutathione biosynthesis; glutathione from L-cysteine and L-glutamate: step 2/2. Catalyzes the production of glutathione from gamma-glutamylcysteine and glycine in an ATP-dependent manner. Glutathione (gamma-glutamylcysteinylglycine, GSH) is the most abundant intracellular thiol in living aerobic cells and is required for numerous processes including the protection of cells against oxidative damage, amino acid transport, the detoxification of foreign compounds, the maintenance of protein sulfhydryl groups in a reduced state and acts as a cofactor for a number of enzymes. Participates in ophthalmate biosynthesis in hepatocytes. This chain is Glutathione synthetase, found in Mus musculus (Mouse).